The chain runs to 312 residues: Porphobilinogen deaminase (312 aa).

Cysteine 243 is modified (S-(dipyrrolylmethanemethyl)cysteine).

This sequence belongs to the HMBS family. In terms of assembly, monomer. Dipyrromethane is required as a cofactor.

It catalyses the reaction 4 porphobilinogen + H2O = hydroxymethylbilane + 4 NH4(+). It functions in the pathway porphyrin-containing compound metabolism; protoporphyrin-IX biosynthesis; coproporphyrinogen-III from 5-aminolevulinate: step 2/4. Functionally, tetrapolymerization of the monopyrrole PBG into the hydroxymethylbilane pre-uroporphyrinogen in several discrete steps. The polypeptide is Porphobilinogen deaminase (Vibrio vulnificus (strain CMCP6)).